A 454-amino-acid chain; its full sequence is C4-dicarboxylate transport protein (454 aa).

A run of 9 helical transmembrane segments spans residues 33–53 (VQVL…PDIG), 66–86 (LVKM…IAGM), 101–121 (IYFL…ANLV), 148–168 (EQSI…GAFA), 170–190 (GDIL…AIVG), 210–230 (LVAI…AFTI), 243–263 (MLIG…LGAV), 354–374 (LLLV…AGFI), and 377–397 (AATL…ILGI).

The protein belongs to the dicarboxylate/amino acid:cation symporter (DAACS) (TC 2.A.23) family.

The protein resides in the cell inner membrane. In terms of biological role, responsible for the transport of dicarboxylates such as succinate, fumarate, and malate from the periplasm across the membrane. The polypeptide is C4-dicarboxylate transport protein (Sinorhizobium medicae (strain WSM419) (Ensifer medicae)).